The primary structure comprises 276 residues: Elongation factor Ts (276 aa).

Residues 81–84 form an involved in Mg(2+) ion dislocation from EF-Tu region; it reads TDFV.

This sequence belongs to the EF-Ts family.

It localises to the cytoplasm. In terms of biological role, associates with the EF-Tu.GDP complex and induces the exchange of GDP to GTP. It remains bound to the aminoacyl-tRNA.EF-Tu.GTP complex up to the GTP hydrolysis stage on the ribosome. The chain is Elongation factor Ts from Leifsonia xyli subsp. xyli (strain CTCB07).